The following is a 1552-amino-acid chain: MSAEAACSDDSFGPWAGATCRGGFDFTLLFEETILSILPSVLVIVVAPIPIIRLAREPPKVRASALDWFKKISSICFITLSAALVGLWARNSTITQTRASTPSAVLTFVLSLVYVLLSTIEHRLSLRPSSVLSFYLGLSVLFDIARTRTLFMLEDATHSAIPPVFASSLALRVVMLLLESTEKRSLLLAKYDNAAPESVGGPYNLGVFYWLSTLFFTGYRKILEIGDLYPLDDELRSTGLAKKMSDAWRKVPDKAAPNVLFATWLKTFSKAMFMPVVPRLFQIGFTYAQPFLITAAIELAATPQTQPYNNNGYGLIGAYILVYSGIAVSVGQYEWRNYRAATMMRGSIIPLVYEKSLILDSCSSATFHPTAALTLVSTDIETITSGLVQIHETWSNLVEIGLAIYLLERQLGAACVMSVGFAIVVMVGTVFLARPTGTHLAAWIQASQVRVIETSKALASIKWLKISGLTDVAFSVIQKLRKQELVVSEKFRYLLGLSLILSICTPILGPLLTFAVFAGIAAHGGSTLTIAKVFTAFSIIVLLNSPLAKIVQALPQISGSIASFQRIQDHLNAEERHDPRSTTTGTSPESNNGSQQTLSDKQATADGDTMISISGKFSWRSETPAPGTGITLVTGSDEGHLADTTPDANGDSRDAPVIDISPRLDIPRGALTLILGPVGCGKSTLLKALLGELSSFDGVIEAKYSGAVTYCDQNPWLPNETVRDIIRGRSATDTSDADSSEKADHDEDWYRVVVSACELQRDMQIWPRGDRTPVGSKGISMSGGQKQRLSIARAVYARRALVILDDVFSGLDANTEDVVFENLLGNSGILRKANMTVVLASSDVRRVPFADKIVLLNQHGQVQHTGTPGDLKQVAELGWADRDLDAQQEKPGKDELNHEHGEYSESAPEKLRRSQTNHGADNNAAVQEVLQAVESQADTARQMGDSAVYKFYVKSAGWLTITIFVIAICVYAFCDSFPSVWLKWWAEANEKNPNSDLGKWLGVYAVLGVGAVAACLIGTWQLFIITINRSGLYFHNLLVETVSRAPMMFHSTTDTGITVNRFSQDLQLIDMELPSAALGVVMALSFGIAQFILVCVSSRYMAALLPFLLAVLYAIQHFYLRTARQLRLLDIEYKAPLYTQLMETISGVVTIRAFRWETQSTEKAIRILDTSQKPSYLLFCVQRWITFAVNMVIMMLAVILIVLTTTLREAIGPGYVGIALSNILAFSATMQATITSWVTLEIALGAVARIRSFSMQVRSEDDEARDGLAKAGLDARLVQPTPETVGERWPSQGRIELDNVTASYPSSGRVLHNITMIIEPGQKVAICGRTGSGKSSLFLSLLGLIAQDSGSITIDSVDLATLPREYLRSQIVAVPQEAYILDGTVRLNADPYHNKETLGSTDPPDSRDEQIIDVLKRVGLWEKIATRGGLDMVIDDKFLSQGQAQLMVLARAMLRRDESRVLLLDEATSSLDEATTTLIDEIVSTWFKDWTVLAIAHKLDAILDYDRVAVLDAGRLVEYDQPRELLQRPTSIFKELYLLSTNQASLSSPDSN.

Transmembrane regions (helical) follow at residues E32 to I52 and W68 to W88. N91 is a glycosylation site (N-linked (GlcNAc...) asparagine). The next 8 helical transmembrane spans lie at S100–I120, H158–L178, L280–A300, N311–G331, A413–A433, A457–I477, I500–I520, and L528–A548. An ABC transmembrane type-1 1 domain is found at L280–G559. The segment at A573–A655 is disordered. The segment covering S581 to Q602 has biased composition (polar residues). N592 carries an N-linked (GlcNAc...) asparagine glycan. The ABC transporter 1 domain occupies G639–L884. G676–S683 is a binding site for ATP. Residues N719 and N834 are each glycosylated (N-linked (GlcNAc...) asparagine). A compositionally biased stretch (basic and acidic residues) spans Q887–R912. The disordered stretch occupies residues Q887–N917. The next 2 helical transmembrane spans lie at G957–F977 and A1005–I1025. The ABC transmembrane type-1 2 domain occupies I963–E1241. N1028 carries an N-linked (GlcNAc...) asparagine glycan. The next 4 membrane-spanning stretches (helical) occupy residues A1076–V1096, Y1100–L1120, W1184–T1204, and A1210–M1230. Residues I1295–L1538 enclose the ABC transporter 2 domain. N-linked (GlcNAc...) asparagine glycosylation is found at N1299 and N1313. Residue G1328 to S1335 coordinates ATP.

This sequence belongs to the ABC transporter superfamily. ABCC family. Conjugate transporter (TC 3.A.1.208) subfamily.

The protein localises to the cell membrane. Its function is as follows. ABC multidrug transporter; part of the gene cluster that mediates the biosynthesis of the lipopeptide antibiotics leucinostatins that show extensive biological activities, including antimalarial, antiviral, antibacterial, antifungal, and antitumor activities, as well as phytotoxic. May be involved in the efflux of leucinostatins. The polypeptide is ABC multidrug transporter lscH (Purpureocillium lilacinum (Paecilomyces lilacinus)).